The primary structure comprises 414 residues: Arrestin domain-containing protein 3 (414 aa).

2 consecutive short sequence motifs (PPxY motif) follow at residues 346–349 and 391–394; these read PPSY and PPLY. Residues 393–414 form a disordered region; it reads LYSEIDPNPDQSADDRPSCPSR. Residues 405-414 are compositionally biased toward basic and acidic residues; sequence ADDRPSCPSR.

This sequence belongs to the arrestin family. Interacts (via PPxY motifs) with NEDD4 (via WW domains). Interacts with ADRB2. Interacts with ADRB3. Interacts with HGS (via PPxY motifs). Does not bind TXN (thioredoxin). Interacts with ITCH.

It is found in the cytoplasm. The protein resides in the cell membrane. The protein localises to the lysosome. It localises to the endosome. Its subcellular location is the early endosome. Adapter protein that plays a role in regulating cell-surface expression of adrenergic receptors and probably also other G protein-coupled receptors. Plays a role in NEDD4-mediated ubiquitination and endocytosis af activated ADRB2 and subsequent ADRB2 degradation. May recruit NEDD4 to ADRB2. Alternatively, may function as adapter protein that does not play a major role in recruiting NEDD4 to ADRB2, but rather plays a role in a targeting ADRB2 to endosomes. The protein is Arrestin domain-containing protein 3 (ARRDC3) of Pongo abelii (Sumatran orangutan).